Here is a 519-residue protein sequence, read N- to C-terminus: Flavonoid 8-hydroxylase 2, chloroplastic (519 aa).

Residues 1 to 46 (MEVLQASSLSFQLLRRHSRNNLINKFRNPSLPRIHMPRQNIDLKTF) constitute a chloroplast transit peptide. Residues 77-188 (WYPVASVCDL…SCVRNGIVWF (112 aa)) form the Rieske domain. Cys119, His121, Cys139, and His142 together coordinate [2Fe-2S] cluster. Residues His241 and His246 each contribute to the Fe cation site. The short motif at 447–450 (CSSC) is the Redox-active motif element. Transmembrane regions (helical) follow at residues 462-478 (IGLQ…AAAV) and 485-501 (YSMV…SKWL).

[2Fe-2S] cluster is required as a cofactor. Glandular trichome-specific expression in leaves.

Its subcellular location is the plastid. The protein localises to the chloroplast membrane. The protein resides in the cytoplasm. The enzyme catalyses salvigenin + 2 reduced [2Fe-2S]-[ferredoxin] + O2 + 2 H(+) = 8-hydroxysalvigenin + 2 oxidized [2Fe-2S]-[ferredoxin] + H2O. Its pathway is flavonoid metabolism. Functionally, rieske-type, PAO-family oxygenase involved in the biosynthesis of polymethoxylated flavonoids natural products such as nevadensin and salvigenin, aroma compounds which contribute to the flavor of sweet basil, and exhibit pharmacological activities such as anti-allergic, anti-oxidant, antibacterial, anti-proliferative, and anti-inflammatory effects. Catalyzes the hydroxylation of salvigenin to produce 8-hydroxysalvigenin (8-OH-SALV). In Ocimum basilicum (Sweet basil), this protein is Flavonoid 8-hydroxylase 2, chloroplastic.